The sequence spans 278 residues: Sulfur carrier protein FdhD (278 aa).

C124 acts as the Cysteine persulfide intermediate in catalysis.

This sequence belongs to the FdhD family.

The protein localises to the cytoplasm. In terms of biological role, required for formate dehydrogenase (FDH) activity. Acts as a sulfur carrier protein that transfers sulfur from IscS to the molybdenum cofactor prior to its insertion into FDH. This Burkholderia cenocepacia (strain ATCC BAA-245 / DSM 16553 / LMG 16656 / NCTC 13227 / J2315 / CF5610) (Burkholderia cepacia (strain J2315)) protein is Sulfur carrier protein FdhD.